The following is a 343-amino-acid chain: Fructose-1,6-bisphosphatase, cytosolic (343 aa).

Residues glutamate 71, glutamate 100, aspartate 121, leucine 123, and aspartate 124 each contribute to the Mg(2+) site. Residues 124–127 (DGSS), asparagine 215, tyrosine 247, tyrosine 267, and lysine 277 contribute to the substrate site. Glutamate 283 is a Mg(2+) binding site.

It belongs to the FBPase class 1 family. Mg(2+) serves as cofactor.

The protein resides in the cytoplasm. It carries out the reaction beta-D-fructose 1,6-bisphosphate + H2O = beta-D-fructose 6-phosphate + phosphate. In Saccharum hybrid (Sugarcane), this protein is Fructose-1,6-bisphosphatase, cytosolic (CFBP).